Here is a 569-residue protein sequence, read N- to C-terminus: Protein AF-9 (569 aa).

Positions 1–138 constitute a YEATS domain; the sequence is MASSCAVQVK…EDFRRKLLKA (138 aa). The interval 138 to 476 is disordered; the sequence is AGGDPNRSIH…PPPPLLKTNN (339 aa). Residues 149–190 show a composition bias toward low complexity; it reads SSSSSSSSSSSSSSSSSSSSSSSSSSSSSSSSSSSSSSSSSS. Residues 202-265 are compositionally biased toward basic and acidic residues; sequence EHKEKPSKDS…PKPMSKEPKA (64 aa). Phosphoserine occurs at positions 289 and 295. A Nuclear localization signal motif is present at residues 296 to 301; sequence AKKRKK. Low complexity predominate over residues 304 to 314; that stretch reads SEALFKSFSSA. The span at 323 to 350 shows a compositional bias: basic and acidic residues; sequence ADKKQIKDKSHVKMGKVKIESETSEKKK. Lys-340 participates in a covalent cross-link: Glycyl lysine isopeptide (Lys-Gly) (interchain with G-Cter in SUMO2). Positions 358–369 are enriched in acidic residues; the sequence is DIVDPNDSDVEE. Residues 372 to 396 show a composition bias toward low complexity; that stretch reads SSKSDSEQPSPASSSSSSSSSFTPS. Residues Ser-413 and Ser-420 each carry the phosphoserine modification. Positions 415–430 are enriched in acidic residues; sequence DNEEESDEAEDNDNDS. The span at 446 to 462 shows a compositional bias: low complexity; the sequence is VSLSDGSDSESSSASSP. Ser-484 bears the Phosphoserine mark.

As to quaternary structure, component of the super elongation complex (SEC), at least composed of EAF1, EAF2, CDK9, MLLT3/AF9, AFF (AFF1 or AFF4), the P-TEFb complex and ELL (ELL, ELL2 or ELL3). Interacts with BCOR. Interacts with CBX8. Interacts with ALKBH4. As to expression, ubiquitously expressed. Strong expression in the spleen.

Its subcellular location is the nucleus. The protein localises to the chromosome. In terms of biological role, chromatin reader component of the super elongation complex (SEC), a complex required to increase the catalytic rate of RNA polymerase II transcription by suppressing transient pausing by the polymerase at multiple sites along the DNA. Specifically recognizes and binds acylated histone H3, with a preference for histone H3 that is crotonylated. Crotonylation marks active promoters and enhancers and confers resistance to transcriptional repressors. Recognizes and binds histone H3 crotonylated at 'Lys-9' (H3K9cr), and with slightly lower affinity histone H3 crotonylated at 'Lys-18' (H3K18cr). Also recognizes and binds histone H3 acetylated and butyrylated at 'Lys-9' (H3K9ac and H3K9bu, respectively), but with lower affinity than crotonylated histone H3. In the SEC complex, MLLT3 is required to recruit the complex to crotonylated histones. Recruitment of the SEC complex to crotonylated histones promotes recruitment of DOT1L on active chromatin to deposit histone H3 'Lys-79' methylation (H3K79me). Plays a key role in hematopoietic stem cell (HSC) maintenance by preserving, rather than conferring, HSC stemness. Acts by binding to the transcription start site of active genes in HSCs and sustaining level of H3K79me2, probably by recruiting DOT1L. The chain is Protein AF-9 (Mllt3) from Mus musculus (Mouse).